We begin with the raw amino-acid sequence, 212 residues long: Kynurenine formamidase (212 aa).

A substrate-binding site is contributed by Trp18. His48, His52, and Asp54 together coordinate Zn(2+). His58 functions as the Proton donor/acceptor in the catalytic mechanism. Positions 160 and 172 each coordinate Zn(2+).

It belongs to the Cyclase 1 superfamily. KynB family. Homodimer. Zn(2+) is required as a cofactor.

The enzyme catalyses N-formyl-L-kynurenine + H2O = L-kynurenine + formate + H(+). The protein operates within amino-acid degradation; L-tryptophan degradation via kynurenine pathway; L-kynurenine from L-tryptophan: step 2/2. In terms of biological role, catalyzes the hydrolysis of N-formyl-L-kynurenine to L-kynurenine, the second step in the kynurenine pathway of tryptophan degradation. This is Kynurenine formamidase from Paraburkholderia xenovorans (strain LB400).